The sequence spans 501 residues: Glucans biosynthesis protein G (501 aa).

Residues 1-25 form the signal peptide; that stretch reads MNRRQVLTGLAALPLLQAKPDPAAA.

The protein belongs to the OpgD/OpgG family.

The protein resides in the periplasm. The protein operates within glycan metabolism; osmoregulated periplasmic glucan (OPG) biosynthesis. In terms of biological role, involved in the biosynthesis of osmoregulated periplasmic glucans (OPGs). This is Glucans biosynthesis protein G from Rhodopseudomonas palustris (strain ATCC BAA-98 / CGA009).